The following is a 163-amino-acid chain: Iron-sulfur cluster assembly protein 2 (163 aa).

The transit peptide at 1-48 directs the protein to the mitochondrion; it reads MMMLRQTSRKAYLGLQASPLGLGRRLYHENVIDHFENPRNVGSFNRND.

Belongs to the NifU family. As to quaternary structure, component of the core Fe-S cluster (ISC) assembly machinery. [2Fe-2S] cluster serves as cofactor. As to expression, mostly expressed in leaves, pollen and flowers.

Its subcellular location is the mitochondrion matrix. The protein operates within cofactor biosynthesis; iron-sulfur cluster biosynthesis. In terms of biological role, scaffold protein for the de novo synthesis of iron-sulfur (Fe-S) clusters within mitochondria, which is required for maturation of both mitochondrial and cytoplasmic [2Fe-2S] and [4Fe-4S] proteins. First, a [2Fe-2S] cluster is transiently assembled on the scaffold protein ISCU (ISU1, ISU2 or ISU3). In a second step, the cluster is released from ISCU, transferred to a glutaredoxin, followed by the formation of mitochondrial [2Fe-2S] proteins, the synthesis of [4Fe-4S] clusters and their target-specific insertion into the recipient apoproteins. Cluster assembly on ISCU depends on the function of the cysteine desulfurase complex NFS1-ISD11, which serves as the sulfur donor for cluster synthesis, the iron-binding protein frataxin as the putative iron donor, and the electron transfer chain comprised of ferredoxin reductase and ferredoxin, which receive their electrons from NADH. In Arabidopsis thaliana (Mouse-ear cress), this protein is Iron-sulfur cluster assembly protein 2 (ISU2).